The following is a 174-amino-acid chain: UPF0113 protein APE_0516.1 (174 aa).

The protein belongs to the UPF0113 family.

The sequence is that of UPF0113 protein APE_0516.1 from Aeropyrum pernix (strain ATCC 700893 / DSM 11879 / JCM 9820 / NBRC 100138 / K1).